The primary structure comprises 316 residues: Methionyl-tRNA formyltransferase (316 aa).

(6S)-5,6,7,8-tetrahydrofolate is bound at residue serine 108–proline 111.

Belongs to the Fmt family.

The enzyme catalyses L-methionyl-tRNA(fMet) + (6R)-10-formyltetrahydrofolate = N-formyl-L-methionyl-tRNA(fMet) + (6S)-5,6,7,8-tetrahydrofolate + H(+). Functionally, attaches a formyl group to the free amino group of methionyl-tRNA(fMet). The formyl group appears to play a dual role in the initiator identity of N-formylmethionyl-tRNA by promoting its recognition by IF2 and preventing the misappropriation of this tRNA by the elongation apparatus. This Heliobacterium modesticaldum (strain ATCC 51547 / Ice1) protein is Methionyl-tRNA formyltransferase.